The primary structure comprises 487 residues: Serine/threonine-protein kinase BSK8 (487 aa).

A lipid anchor (N-myristoyl glycine) is attached at Gly2. Ser20 carries the phosphoserine modification. The Protein kinase domain occupies 59–325 (ENIVSEHGER…DLEIASHQLL (267 aa)). Residues 65-73 (HGERAPNVV), Asn71, Lys87, and 133-135 (EFM) contribute to the ATP site. The active-site Proton acceptor is the Asp181. ATP contacts are provided by residues 185-186 (YR) and Asn205. A Phosphoserine modification is found at Ser213.

This sequence belongs to the protein kinase superfamily. Ser/Thr protein kinase family. As to quaternary structure, interacts with ASK7/BIN2, BSK1, BSK5, BSK6 and BSK11. Interacts with BSL2. In terms of processing, phosphorylated by BRI1, ASK7/BIN2 and ASK9/BIL2.

It localises to the cell membrane. It carries out the reaction L-seryl-[protein] + ATP = O-phospho-L-seryl-[protein] + ADP + H(+). It catalyses the reaction L-threonyl-[protein] + ATP = O-phospho-L-threonyl-[protein] + ADP + H(+). Probable serine/threonine kinase that acts as a positive regulator of brassinosteroid (BR) signaling downstream of the receptor kinase BRI1. Functions redundantly with BSK3, BSK4, BSK6 and BSK7. Involved in the regulation of sucrose-phosphate synthase 1 (SPS1) in the context of sucrose resuply after starvation. Activates BSL2, a phosphatase that may dephosphorylate SPS1, leading to the activation of SPS1. The sequence is that of Serine/threonine-protein kinase BSK8 from Arabidopsis thaliana (Mouse-ear cress).